The primary structure comprises 72 residues: MSKVCVLTGKRPKYGNTVSHANNHVRTRFEPNLHTKKIWIEEEKRFVKVKLSAKAMKIIAKTGTAQLAKLLK.

This sequence belongs to the bacterial ribosomal protein bL28 family.

This Chlorobium phaeobacteroides (strain DSM 266 / SMG 266 / 2430) protein is Large ribosomal subunit protein bL28.